The chain runs to 335 residues: S-adenosylmethionine decarboxylase proenzyme (335 aa).

Catalysis depends on residues Glu-12 and Glu-15. Ser-70 functions as the Schiff-base intermediate with substrate; via pyruvic acid in the catalytic mechanism. Ser-70 carries the post-translational modification Pyruvic acid (Ser); by autocatalysis. Cys-84 serves as the catalytic Proton donor; for catalytic activity. Residues Ser-231 and His-245 each act as proton acceptor; for processing activity in the active site.

Belongs to the eukaryotic AdoMetDC family. The cofactor is pyruvate. Is synthesized initially as an inactive proenzyme. Formation of the active enzyme involves a self-maturation process in which the active site pyruvoyl group is generated from an internal serine residue via an autocatalytic post-translational modification. Two non-identical subunits are generated from the proenzyme in this reaction, and the pyruvate is formed at the N-terminus of the alpha chain, which is derived from the carboxyl end of the proenzyme. The post-translation cleavage follows an unusual pathway, termed non-hydrolytic serinolysis, in which the side chain hydroxyl group of the serine supplies its oxygen atom to form the C-terminus of the beta chain, while the remainder of the serine residue undergoes an oxidative deamination to produce ammonia and the pyruvoyl group blocking the N-terminus of the alpha chain.

It catalyses the reaction S-adenosyl-L-methionine + H(+) = S-adenosyl 3-(methylsulfanyl)propylamine + CO2. It participates in amine and polyamine biosynthesis; S-adenosylmethioninamine biosynthesis; S-adenosylmethioninamine from S-adenosyl-L-methionine: step 1/1. Functionally, essential for biosynthesis of the polyamines spermidine and spermine. Promotes maintenance and self-renewal of embryonic stem cells, by maintaining spermine levels. The chain is S-adenosylmethionine decarboxylase proenzyme (amd1) from Xenopus laevis (African clawed frog).